The sequence spans 173 residues: MVEKRNIFLIGPMGAGKSTIGRQISQQLSMEFFDSDQEIEKRTGADISWVLDLEGENKFRIREEKIINEITEKQGIVLATGGGSIQSRKTRNRLSARGLVVYLETTIDKQLDRTKRDKKKPILQNKNSVKSFLEKLATERNPLYEDIADLIIKTDFKSAKIIAHQIINTLFKT.

14 to 19 (GAGKST) is an ATP binding site. Ser-18 contributes to the Mg(2+) binding site. Residues Asp-36, Arg-60, and Gly-82 each coordinate substrate. Lys-120 contributes to the ATP binding site. Substrate is bound at residue Arg-140.

The protein belongs to the shikimate kinase family. Monomer. It depends on Mg(2+) as a cofactor.

The protein localises to the cytoplasm. The enzyme catalyses shikimate + ATP = 3-phosphoshikimate + ADP + H(+). The protein operates within metabolic intermediate biosynthesis; chorismate biosynthesis; chorismate from D-erythrose 4-phosphate and phosphoenolpyruvate: step 5/7. Catalyzes the specific phosphorylation of the 3-hydroxyl group of shikimic acid using ATP as a cosubstrate. In Wigglesworthia glossinidia brevipalpis, this protein is Shikimate kinase (aroK).